The chain runs to 755 residues: Polycomb protein SUZ12 (755 aa).

3 disordered regions span residues 26 to 79 (KMGN…RRIS), 333 to 377 (NANG…SRRA), and 392 to 420 (AVGR…SDDR). A compositionally biased stretch (low complexity) spans 30–42 (KASSQAQKRSQSQ). 2 stretches are compositionally biased toward polar residues: residues 43 to 57 (TGDS…DGSG) and 349 to 359 (TQPNGTHNEGT). Over residues 411–420 (GEDHPPSDDR) the composition is skewed to basic and acidic residues. Residues 436 to 458 (FACLICGAENERLSQLRAHYMCH) form a C2H2-type zinc finger. Residues 580–645 (IDDSWLLLKH…KADWLVSKRS (66 aa)) form a polycomb protein VEFS-Box region.

Belongs to the VEFS (VRN2-EMF2-FIS2-SU(Z)12) family. In terms of assembly, component of the polycomb repressive complex 2 (PRC2) that consists of four core subunits icluding EZH2, EED, SUZ12, and RBBP4, among which EZH2 is the catalytic subunit and which minimally requires EED and SUZ12 for catalysis.

Its subcellular location is the nucleus. In terms of biological role, component of the of the Polycomb Repressive Complex 2 (PRC2), a histone H3 lysine methyltransferase responsible for generating mono-, di-, and tri-methylation on Lys27 (H3K27me1, H3K27me2 and H3K27me3). The tri-methylated form is known to be critical in gene repression, and its proper placement is essential in defining repression patterns during development. SUZ12 is not a catalytic subunit but is required for the complex regulation of histone H3 lysine methylation by EZH2. The sequence is that of Polycomb protein SUZ12 from Chaetomium thermophilum (strain DSM 1495 / CBS 144.50 / IMI 039719) (Thermochaetoides thermophila).